The following is a 263-amino-acid chain: (R)-S-adenosyl-L-methionine hydrolase (263 aa).

Adenosine contacts are provided by Asp18, Asp82, and Asn181. Residues Asn181, Tyr221, Ser234, Glu239, and Met244 each coordinate (R)-S-adenosyl-L-methionine.

This sequence belongs to the SAM hydrolase / SAM-dependent halogenase family. Homotrimer.

The enzyme catalyses (R)-S-adenosyl-L-methionine + H2O = adenosine + L-methionine + H(+). Catalyzes the hydrolysis of S-adenosyl-L-methionine (SAM) into adenosine and L-methionine. Does not have chlorinase or fluorinase activity. The chain is (R)-S-adenosyl-L-methionine hydrolase from Methanocaldococcus jannaschii (strain ATCC 43067 / DSM 2661 / JAL-1 / JCM 10045 / NBRC 100440) (Methanococcus jannaschii).